The sequence spans 193 residues: Interferon lambda-3 (193 aa).

The first 19 residues, 1–19, serve as a signal peptide directing secretion; the sequence is MLLLLLPLLLAAVLTRTQA. 3 disulfides stabilise this stretch: cysteine 35/cysteine 132, cysteine 69/cysteine 166, and cysteine 185/cysteine 192.

The protein belongs to the lambda interferon family.

The protein localises to the secreted. In terms of biological role, cytokine with antiviral, antitumour and immunomodulatory activities. Plays a critical role in the antiviral host defense, predominantly in the epithelial tissues. Acts as a ligand for the heterodimeric class II cytokine receptor composed of IL10RB and IFNLR1, and receptor engagement leads to the activation of the JAK/STAT signaling pathway resulting in the expression of IFN-stimulated genes (ISG), which mediate the antiviral state. Has a restricted receptor distribution and therefore restricted targets: is primarily active in epithelial cells and this cell type-selective action is because of the epithelial cell-specific expression of its receptor IFNLR1. Seems not to be essential for early virus-activated host defense in vaginal infection, but plays an important role in Toll-like receptor (TLR)-induced antiviral defense. Plays a significant role in the antiviral immune defense in the intestinal epithelium. Exerts an immunomodulatory effect by up-regulating MHC class I antigen expression. This chain is Interferon lambda-3 (Ifnl3), found in Mus musculus (Mouse).